We begin with the raw amino-acid sequence, 110 residues long: Endoribonuclease SymE (110 aa).

Positions 29–74 (SRYPDYTRIPALTMKGQWLEAAGFATGTEVDVRVMNGCIVLTAQQP) constitute a SpoVT-AbrB domain.

It belongs to the SymE family.

The protein localises to the cytoplasm. Involved in the degradation and recycling of damaged RNA. It is itself a target for degradation by the ATP-dependent protease Lon. The chain is Endoribonuclease SymE from Salmonella heidelberg (strain SL476).